The following is a 78-amino-acid chain: Acyl carrier protein (78 aa).

The region spanning 4-78 (AEIKDKVYDI…QQAIDYIVKK (75 aa)) is the Carrier domain. An O-(pantetheine 4'-phosphoryl)serine modification is found at serine 39.

It belongs to the acyl carrier protein (ACP) family. In terms of processing, 4'-phosphopantetheine is transferred from CoA to a specific serine of apo-ACP by AcpS. This modification is essential for activity because fatty acids are bound in thioester linkage to the sulfhydryl of the prosthetic group.

Its subcellular location is the cytoplasm. It functions in the pathway lipid metabolism; fatty acid biosynthesis. Its function is as follows. Carrier of the growing fatty acid chain in fatty acid biosynthesis. This chain is Acyl carrier protein, found in Chlorobium limicola (strain DSM 245 / NBRC 103803 / 6330).